The primary structure comprises 107 residues: Integration host factor subunit beta (107 aa).

The segment at 54–107 (NRRPARVGRNPKSGEKVQVPEKHVPHFKPGKELRERVDGRAGEPLKNDEPEDGQ) is disordered. Over residues 65–101 (KSGEKVQVPEKHVPHFKPGKELRERVDGRAGEPLKND) the composition is skewed to basic and acidic residues.

Belongs to the bacterial histone-like protein family. As to quaternary structure, heterodimer of an alpha and a beta chain.

Functionally, this protein is one of the two subunits of integration host factor, a specific DNA-binding protein that functions in genetic recombination as well as in transcriptional and translational control. The chain is Integration host factor subunit beta from Burkholderia thailandensis (strain ATCC 700388 / DSM 13276 / CCUG 48851 / CIP 106301 / E264).